A 415-amino-acid chain; its full sequence is Ribulose bisphosphate carboxylase large chain (415 aa).

The substrate site is built by N101 and T151. K153 functions as the Proton acceptor in the catalytic mechanism. Residue K155 coordinates substrate. 3 residues coordinate Mg(2+): K179, D181, and E182. Residue K179 is modified to N6-carboxylysine. H272 serves as the catalytic Proton acceptor. Substrate-binding residues include R273, H305, and S357.

This sequence belongs to the RuBisCO large chain family. Type I subfamily. In terms of assembly, heterohexadecamer of 8 large chains and 8 small chains; disulfide-linked. The disulfide link is formed within the large subunit homodimers. It depends on Mg(2+) as a cofactor. Post-translationally, the disulfide bond which can form in the large chain dimeric partners within the hexadecamer appears to be associated with oxidative stress and protein turnover.

It localises to the plastid. The protein resides in the chloroplast. The enzyme catalyses 2 (2R)-3-phosphoglycerate + 2 H(+) = D-ribulose 1,5-bisphosphate + CO2 + H2O. It carries out the reaction D-ribulose 1,5-bisphosphate + O2 = 2-phosphoglycolate + (2R)-3-phosphoglycerate + 2 H(+). In terms of biological role, ruBisCO catalyzes two reactions: the carboxylation of D-ribulose 1,5-bisphosphate, the primary event in carbon dioxide fixation, as well as the oxidative fragmentation of the pentose substrate in the photorespiration process. Both reactions occur simultaneously and in competition at the same active site. The protein is Ribulose bisphosphate carboxylase large chain of Cibotium barometz (Scythian lamb).